The primary structure comprises 283 residues: Phosphatidylglycerol--prolipoprotein diacylglyceryl transferase (283 aa).

The next 7 helical transmembrane spans lie at 18–38 (LGGI…VVAF), 62–82 (YFLW…VLIY), 106–126 (FIGI…IASY), 136–156 (LLIY…FGRI), 190–210 (PSQL…VMWA), 218–238 (GLLI…AEFY), and 252–272 (LSMG…ILLY). Arg-155 lines the a 1,2-diacyl-sn-glycero-3-phospho-(1'-sn-glycerol) pocket.

Belongs to the Lgt family.

The protein resides in the cell inner membrane. The catalysed reaction is L-cysteinyl-[prolipoprotein] + a 1,2-diacyl-sn-glycero-3-phospho-(1'-sn-glycerol) = an S-1,2-diacyl-sn-glyceryl-L-cysteinyl-[prolipoprotein] + sn-glycerol 1-phosphate + H(+). The protein operates within protein modification; lipoprotein biosynthesis (diacylglyceryl transfer). Catalyzes the transfer of the diacylglyceryl group from phosphatidylglycerol to the sulfhydryl group of the N-terminal cysteine of a prolipoprotein, the first step in the formation of mature lipoproteins. The sequence is that of Phosphatidylglycerol--prolipoprotein diacylglyceryl transferase from Helicobacter pylori (strain J99 / ATCC 700824) (Campylobacter pylori J99).